The primary structure comprises 58 residues: SPbeta prophage-derived uncharacterized protein YotN (58 aa).

This is SPbeta prophage-derived uncharacterized protein YotN (yotN) from Bacillus subtilis (strain 168).